Reading from the N-terminus, the 156-residue chain is uncharacterized protein (156 aa).

3 consecutive transmembrane segments (helical) span residues 42-59 (LLMM…MTTV), 79-98 (ASFL…LLLY), and 105-127 (SLGR…VLGI).

Its subcellular location is the cell membrane. This is an uncharacterized protein from Archaeoglobus fulgidus (strain ATCC 49558 / DSM 4304 / JCM 9628 / NBRC 100126 / VC-16).